Consider the following 318-residue polypeptide: Pyrimidine-specific ribonucleoside hydrolase RihA (318 aa).

His-240 is a catalytic residue.

Belongs to the IUNH family. RihA subfamily.

Its function is as follows. Hydrolyzes cytidine or uridine to ribose and cytosine or uracil, respectively. The polypeptide is Pyrimidine-specific ribonucleoside hydrolase RihA (Shewanella baltica (strain OS185)).